A 353-amino-acid chain; its full sequence is MAQARNSRIKVGIVGGTGYTGVELLRLLSQHPDVELTAITSRKEDGLPVAEMYPNLRGHVKLAFSAPEKASLTDCDVVFFATPHGVAMAQAQALTAAGTRVIDLAADFRLQDTASFERWYKMPHGCPDILAKQSAYGLVELNRAAIAQAQVIGNPGCYPTTVILGLAPLLERKLIDTQALIADCKSGVSGAGRKAEVASLFSEASDNFKAYGVAGHRHHPEITEQLEKLAGGKVGLTFVPHLVPMIRGMFSTIYARILPEARETDFQALFEERYAGEAFIDVMPAGSLPETRSVRASNNLRIAVQRPGNGDQLIVLVVQDNLVKGAAGQAVQNMNLMFGLPETTGLNQVAILP.

Residue Cys-157 is part of the active site.

Belongs to the NAGSA dehydrogenase family. Type 1 subfamily.

Its subcellular location is the cytoplasm. It catalyses the reaction N-acetyl-L-glutamate 5-semialdehyde + phosphate + NADP(+) = N-acetyl-L-glutamyl 5-phosphate + NADPH + H(+). It participates in amino-acid biosynthesis; L-arginine biosynthesis; N(2)-acetyl-L-ornithine from L-glutamate: step 3/4. Its function is as follows. Catalyzes the NADPH-dependent reduction of N-acetyl-5-glutamyl phosphate to yield N-acetyl-L-glutamate 5-semialdehyde. This chain is N-acetyl-gamma-glutamyl-phosphate reductase, found in Bordetella avium (strain 197N).